The chain runs to 443 residues: ATP-dependent protease ATPase subunit HslU (443 aa).

ATP-binding positions include Ile-19, Gly-61–Glu-66, Asp-256, Glu-321, and Arg-393.

It belongs to the ClpX chaperone family. HslU subfamily. A double ring-shaped homohexamer of HslV is capped on each side by a ring-shaped HslU homohexamer. The assembly of the HslU/HslV complex is dependent on binding of ATP.

Its subcellular location is the cytoplasm. Functionally, ATPase subunit of a proteasome-like degradation complex; this subunit has chaperone activity. The binding of ATP and its subsequent hydrolysis by HslU are essential for unfolding of protein substrates subsequently hydrolyzed by HslV. HslU recognizes the N-terminal part of its protein substrates and unfolds these before they are guided to HslV for hydrolysis. This Ralstonia pickettii (strain 12J) protein is ATP-dependent protease ATPase subunit HslU.